The chain runs to 126 residues: Glycine cleavage system H protein (126 aa).

The region spanning 22-104 is the Lipoyl-binding domain; the sequence is IAYVGITDYA…YGEGWLIKMK (83 aa). An N6-lipoyllysine modification is found at Lys-63.

Belongs to the GcvH family. As to quaternary structure, the glycine cleavage system is composed of four proteins: P, T, L and H. Requires (R)-lipoate as cofactor.

Functionally, the glycine cleavage system catalyzes the degradation of glycine. The H protein shuttles the methylamine group of glycine from the P protein to the T protein. The sequence is that of Glycine cleavage system H protein from Bacteroides thetaiotaomicron (strain ATCC 29148 / DSM 2079 / JCM 5827 / CCUG 10774 / NCTC 10582 / VPI-5482 / E50).